Here is a 214-residue protein sequence, read N- to C-terminus: MQAYQRDFIRFAIDRGVLRFGEFTLKSGRTSPYFFNAGLFNSGSALAQLGRFYAAAIAESGIPFDVLFGPAYKGIPLAATTAVALAEHHNRDLPWCFNRKEAKAHGEGGSLVGAPLTGDVLIIDDVITAGTAIREVMQIIASQDGAKAAGVLIALNRQERGNGELSAIQEVERDFGIPVISIVSLNQVLEFLADDPQLKQHLPAVEAYRAQFGV.

Residue Lys-26 participates in 5-phospho-alpha-D-ribose 1-diphosphate binding. 34 to 35 (FF) is a binding site for orotate. 5-phospho-alpha-D-ribose 1-diphosphate-binding positions include 72 to 73 (YK), Arg-99, Lys-100, Lys-103, His-105, and 124 to 132 (DDVITAGTA). Orotate contacts are provided by Thr-128 and Arg-157.

It belongs to the purine/pyrimidine phosphoribosyltransferase family. PyrE subfamily. As to quaternary structure, homodimer. The cofactor is Mg(2+).

It catalyses the reaction orotidine 5'-phosphate + diphosphate = orotate + 5-phospho-alpha-D-ribose 1-diphosphate. The protein operates within pyrimidine metabolism; UMP biosynthesis via de novo pathway; UMP from orotate: step 1/2. Catalyzes the transfer of a ribosyl phosphate group from 5-phosphoribose 1-diphosphate to orotate, leading to the formation of orotidine monophosphate (OMP). This is Orotate phosphoribosyltransferase from Pseudomonas fluorescens (strain Pf0-1).